A 202-amino-acid chain; its full sequence is Dephospho-CoA kinase (202 aa).

Positions 6-202 (KVSITGDLSS…EYFYALKGAL (197 aa)) constitute a DPCK domain. 14-19 (SSGKTE) is a binding site for ATP.

This sequence belongs to the CoaE family.

It is found in the cytoplasm. It carries out the reaction 3'-dephospho-CoA + ATP = ADP + CoA + H(+). The protein operates within cofactor biosynthesis; coenzyme A biosynthesis; CoA from (R)-pantothenate: step 5/5. In terms of biological role, catalyzes the phosphorylation of the 3'-hydroxyl group of dephosphocoenzyme A to form coenzyme A. This Chlamydia caviae (strain ATCC VR-813 / DSM 19441 / 03DC25 / GPIC) (Chlamydophila caviae) protein is Dephospho-CoA kinase.